Consider the following 347-residue polypeptide: Isopentenyl-diphosphate delta-isomerase (347 aa).

Residue 5–6 (RK) coordinates substrate. FMN-binding positions include Ser-61, 62–64 (SMT), Ser-92, and Asn-120. Substrate is bound at residue 92–94 (SMR). A substrate-binding site is contributed by Gln-159. Glu-160 provides a ligand contact to Mg(2+). FMN-binding positions include Lys-189, Ser-214, Thr-219, 269–271 (GLR), and 290–291 (AR).

Belongs to the IPP isomerase type 2 family. As to quaternary structure, homooctamer. Dimer of tetramers. Requires FMN as cofactor. The cofactor is NADPH. Mg(2+) serves as cofactor.

Its subcellular location is the cytoplasm. The catalysed reaction is isopentenyl diphosphate = dimethylallyl diphosphate. Its function is as follows. Involved in the biosynthesis of isoprenoids. Catalyzes the 1,3-allylic rearrangement of the homoallylic substrate isopentenyl (IPP) to its allylic isomer, dimethylallyl diphosphate (DMAPP). This is Isopentenyl-diphosphate delta-isomerase from Thermoplasma volcanium (strain ATCC 51530 / DSM 4299 / JCM 9571 / NBRC 15438 / GSS1).